A 303-amino-acid polypeptide reads, in one-letter code: Aquaporin-7 (303 aa).

Residues 1–21 (MAPRSVLETIQSVLQKNMVRE) are Cytoplasmic-facing. A Phosphoserine modification is found at Ser-5. The helical transmembrane segment at 22–39 (FLAEFLSTYVMMVFGLGS) threads the bilayer. The Extracellular segment spans residues 40 to 52 (VAHMVLGENSGSY). Residues 53-70 (LGVNLGFGFGVTMGVHVA) form a helical membrane-spanning segment. Topologically, residues 71-74 (GGIS) are cytoplasmic. The discontinuously helical intramembrane region spans 75-88 (GAHMNAAVTFTNCA). The NPA 1 signature appears at 79–81 (NAA). Topologically, residues 89–96 (LGRMTWKK) are cytoplasmic. The chain crosses the membrane as a helical span at residues 97–117 (FPVYVLGQFLGSFSAAATTYL). The Extracellular segment spans residues 118–152 (IFYGAINHFAGGDLLVTGSKATANIFATYLPEYMT). The helical transmembrane segment at 153–173 (LWRGFLDEAFVTGMLQLCLFA) threads the bilayer. Residues 174 to 185 (ITDKKNSPALQG) are Cytoplasmic-facing. The helical transmembrane segment at 186 to 202 (TEPLVIGILVTVLGVSL) threads the bilayer. Over 203-206 (GMNS) the chain is Extracellular. An intramembrane region (discontinuously helical) is located at residues 207–220 (GYAINPSRDLPPRL). Residues 211 to 213 (NPS) carry the NPA 2 motif. At 221 to 238 (FTFIAGWGKQVFRAGNNW) the chain is on the extracellular side. Residues 239–260 (WWVPVVAPLLGAYLGGIVYLGL) form a helical membrane-spanning segment. Residues 261–303 (IHPSIPQDPQRLENFTARDQKVTASYKNAASANISGSVPLEHF) are Cytoplasmic-facing.

This sequence belongs to the MIP/aquaporin (TC 1.A.8) family. Homotetramer; each monomer provides an independent glycerol/water pore. Two homotetramers on opposing membranes can dimerize, forming a cell-cell junction. Interacts with PLIN1. In terms of processing, phosphorylation by PKA could prevent the interaction with PLIN1. Detected in proximal tubules in kidney. Detected in the capillary network between muscle fibers in skeletal muscle and heart, and in spermatids and on spermatozoa tails in testis and epididymis. Detected in white and brown adipose tissue, especially on small blood vessels (at protein level). Detected in kidney and white adipose tissue.

The protein resides in the cell membrane. The protein localises to the cytoplasmic vesicle membrane. It is found in the lipid droplet. The enzyme catalyses glycerol(in) = glycerol(out). It carries out the reaction H2O(in) = H2O(out). The catalysed reaction is urea(in) = urea(out). Glycerol transport is regulated by pH, with the porin being permeable to glycerol at pH 7.4 but not at pH 5.5. Water permeability, however, is not influenced by pH. Functionally, aquaglyceroporins form homotetrameric transmembrane channels, with each monomer independently mediating glycerol and water transport across the plasma membrane along their osmotic gradient. Could also be permeable to urea. Mediates the efflux of glycerol, formed upon triglyceride hydrolysis, to avoid its accumulation in adipocytes and to make it available to other tissues. In the kidney, mediates the reabsorption of glycerol, preventing its loss in urine, again participating to energy homeostasis. In pancreatic beta cells, it also mediates the efflux of glycerol, regulating its intracellular levels. The chain is Aquaporin-7 from Mus musculus (Mouse).